A 197-amino-acid chain; its full sequence is Large ribosomal subunit protein eL15 (197 aa).

The span at 163–172 (GKTSAGRKGR) shows a compositional bias: basic residues. The tract at residues 163-197 (GKTSAGRKGRGMQTRGTGTEKTRPSVRSNLNRSKK) is disordered. The span at 186-197 (PSVRSNLNRSKK) shows a compositional bias: polar residues.

Belongs to the eukaryotic ribosomal protein eL15 family.

The polypeptide is Large ribosomal subunit protein eL15 (Methanococcoides burtonii (strain DSM 6242 / NBRC 107633 / OCM 468 / ACE-M)).